Reading from the N-terminus, the 651-residue chain is Cylicin-1 (651 aa).

Disordered stretches follow at residues 110–241 (LKKA…CSEN) and 267–615 (NYSQ…CEPS). Composition is skewed to basic and acidic residues over residues 111–129 (KKAE…PLKK) and 146–173 (QIVE…EQSK). Residues 186 to 195 (QNSKTVSKNC) show a composition bias toward polar residues. Positions 196 to 205 (SQKDKKDSKN) are enriched in basic and acidic residues. Polar residues predominate over residues 230-241 (SNDPISEICSEN). Over residues 271 to 281 (NNSKNYSLKYT) the composition is skewed to low complexity. 8 tandem repeats follow at residues 278–305 (LKYT…DSKD), 306–342 (AKKD…DSKD), 343–379 (ERKD…DAKD), 380–417 (ARND…ESKE), 418–453 (SQKD…PKGD), 454–491 (SKKG…SDLE), 492–531 (LKKD…SKTG), and 532–553 (FKTS…YKPG). Basic and acidic residues-rich tracts occupy residues 284–308 (TKKD…DAKK), 318–331 (KKDD…KDTE), 338–368 (GDSK…KYPE), 375–402 (GDAK…DAKK), 413–441 (LESK…KNDE), and 448–482 (SEPK…KNAE). Residues 495 to 505 (DKKHSKEKKGS) show a composition bias toward basic residues. Residues 506–518 (KKDIKKDARKDTE) show a composition bias toward basic and acidic residues. The segment covering 529-538 (KTGFKTSTKI) has biased composition (polar residues). Residues 532 to 553 (FKTSTKIKGSDTESEESLYKPG) are 8 X approximate tandem repeats. The segment covering 587-607 (TFNEKGEKASTGRVPPSREKP) has biased composition (basic and acidic residues).

In terms of assembly, interacts with proteins of spermatozoa head including ACTL7A, CCIN, FAM209A and SPACA1; the interactions may be necessary for proper acrosome attachment to the nuclear envelope. As to expression, testis.

The protein localises to the cytoplasm. Its subcellular location is the cytoskeleton. The protein resides in the perinuclear theca. It is found in the calyx. In terms of biological role, plays a role in the establishment of normal sperm morphology during spermatogenesis and is required for acrosome attachment to the nuclear envelope. The chain is Cylicin-1 (CYLC1) from Homo sapiens (Human).